The chain runs to 251 residues: 3-deoxy-manno-octulosonate cytidylyltransferase (251 aa).

It belongs to the KdsB family.

The protein resides in the cytoplasm. The catalysed reaction is 3-deoxy-alpha-D-manno-oct-2-ulosonate + CTP = CMP-3-deoxy-beta-D-manno-octulosonate + diphosphate. It participates in nucleotide-sugar biosynthesis; CMP-3-deoxy-D-manno-octulosonate biosynthesis; CMP-3-deoxy-D-manno-octulosonate from 3-deoxy-D-manno-octulosonate and CTP: step 1/1. The protein operates within bacterial outer membrane biogenesis; lipopolysaccharide biosynthesis. Activates KDO (a required 8-carbon sugar) for incorporation into bacterial lipopolysaccharide in Gram-negative bacteria. The chain is 3-deoxy-manno-octulosonate cytidylyltransferase from Brucella abortus (strain 2308).